Reading from the N-terminus, the 284-residue chain is Cell division protein DivIB (284 aa).

Residues 1–10 (MAWLRKKEQQ) are compositionally biased toward basic and acidic residues. The tract at residues 1–38 (MAWLRKKEQQSDPLTPWQQYQARQQQTPRHDRRQKPKL) is disordered. At 1 to 56 (MAWLRKKEQQSDPLTPWQQYQARQQQTPRHDRRQKPKLDVNLPKIQTLRRRKLVKN) the chain is on the cytoplasmic side. The helical transmembrane segment at 57-77 (LVLILLPLLLLLGVFGYFASP) threads the bilayer. The Extracellular portion of the chain corresponds to 78–284 (LSKVGLVSVQ…YSSSEKSSND (207 aa)). The region spanning 79–150 (SKVGLVSVQG…NRIIIKTSEY (72 aa)) is the POTRA domain.

This sequence belongs to the FtsQ/DivIB family. DivIB subfamily.

It is found in the cell membrane. Functionally, cell division protein that may be involved in stabilizing or promoting the assembly of the division complex. The sequence is that of Cell division protein DivIB from Lacticaseibacillus rhamnosus (strain ATCC 53103 / LMG 18243 / GG) (Lactobacillus rhamnosus).